The primary structure comprises 350 residues: Inner membrane protein YhiM (350 aa).

Residues M1 to N2 lie on the Cytoplasmic side of the membrane. Residues I3 to L23 traverse the membrane as a helical segment. Topologically, residues G24–H41 are periplasmic. The helical transmembrane segment at V42–S62 threads the bilayer. The Cytoplasmic segment spans residues Q63–T74. The chain crosses the membrane as a helical span at residues L75–L95. Residues A96–E104 are Periplasmic-facing. Residues F105–A125 form a helical membrane-spanning segment. Over A126–N157 the chain is Cytoplasmic. The chain crosses the membrane as a helical span at residues C158–L178. At R179–G190 the chain is on the periplasmic side. A helical membrane pass occupies residues H191 to V211. The Cytoplasmic segment spans residues H212 to L225. Residues W226 to V246 traverse the membrane as a helical segment. Over S247–G257 the chain is Periplasmic. A helical membrane pass occupies residues I258–A278. At L279–R290 the chain is on the cytoplasmic side. The helical transmembrane segment at I291–E311 threads the bilayer. Topologically, residues M312–R324 are periplasmic. Residues V325 to A345 form a helical membrane-spanning segment. Over G346 to K350 the chain is Cytoplasmic.

The protein localises to the cell inner membrane. The protein is Inner membrane protein YhiM (yhiM) of Escherichia coli (strain K12).